Consider the following 571-residue polypeptide: Urease subunit alpha (571 aa).

Positions 132 to 571 (GGIDAHIHFI…VALAQRYFLF (440 aa)) constitute a Urease domain. Positions 137, 139, and 220 each coordinate Ni(2+). Lys-220 carries the N6-carboxylysine modification. His-222 contributes to the substrate binding site. Ni(2+)-binding residues include His-249 and His-275. Residue His-323 is the Proton donor of the active site. Asp-363 contributes to the Ni(2+) binding site.

This sequence belongs to the metallo-dependent hydrolases superfamily. Urease alpha subunit family. Heterotrimer of UreA (gamma), UreB (beta) and UreC (alpha) subunits. Three heterotrimers associate to form the active enzyme. It depends on Ni cation as a cofactor. In terms of processing, carboxylation allows a single lysine to coordinate two nickel ions.

It localises to the cytoplasm. It catalyses the reaction urea + 2 H2O + H(+) = hydrogencarbonate + 2 NH4(+). Its pathway is nitrogen metabolism; urea degradation; CO(2) and NH(3) from urea (urease route): step 1/1. The protein is Urease subunit alpha of Halalkalibacterium halodurans (strain ATCC BAA-125 / DSM 18197 / FERM 7344 / JCM 9153 / C-125) (Bacillus halodurans).